The chain runs to 126 residues: Fluoride-specific ion channel FluC (126 aa).

The next 4 membrane-spanning stretches (helical) occupy residues 4-24 (PLLS…FLGL), 33-53 (IPLG…FAMA), 67-87 (FVIT…IEIV), and 97-117 (MAML…CLGL). Residues Gly-74 and Thr-77 each contribute to the Na(+) site.

Belongs to the fluoride channel Fluc/FEX (TC 1.A.43) family.

Its subcellular location is the cell inner membrane. It catalyses the reaction fluoride(in) = fluoride(out). Na(+) is not transported, but it plays an essential structural role and its presence is essential for fluoride channel function. Functionally, fluoride-specific ion channel. Important for reducing fluoride concentration in the cell, thus reducing its toxicity. The chain is Fluoride-specific ion channel FluC from Acinetobacter baumannii (strain ATCC 17978 / DSM 105126 / CIP 53.77 / LMG 1025 / NCDC KC755 / 5377).